Here is a 730-residue protein sequence, read N- to C-terminus: Translation factor GUF1 homolog, mitochondrial (730 aa).

Positions 106–289 (ELIRNFCIIA…AVVVSIPPPK (184 aa)) constitute a tr-type G domain. Residues 115 to 122 (AHVDHGKS), 182 to 186 (DTPGH), and 236 to 239 (NKID) each bind GTP.

Belongs to the TRAFAC class translation factor GTPase superfamily. Classic translation factor GTPase family. LepA subfamily.

The protein resides in the mitochondrion inner membrane. The catalysed reaction is GTP + H2O = GDP + phosphate + H(+). Its function is as follows. Promotes mitochondrial protein synthesis. May act as a fidelity factor of the translation reaction, by catalyzing a one-codon backward translocation of tRNAs on improperly translocated ribosomes. Binds to mitochondrial ribosomes in a GTP-dependent manner. The protein is Translation factor GUF1 homolog, mitochondrial of Theileria annulata.